A 565-amino-acid chain; its full sequence is MKSPAPSRPQKMALIPACIFLCFAALSVQAEETSVTPQPPDILLGPLFNDVQNAKLFPDQKTFADAVPNSDPLMILADYRMQQNQSGFDLRHFVNVNFTLPKEGEKYVPPEGQSLREHIDGLWPVLTRSTENTEKWDSLLPLPKPYVVPGGRFREVYYWDSYFTMLGLAESGHWDKVADMVANFAHEIDNYGHIPNGNRSYYLSRSQPPFFALMVELLAQHEGDAALKQYLPQMQKEYAYWMDGVENLQAGQQEKRVVKLQDGTLLNRYWDDRDTPRPESWVEDIATAKSNPNRPATEIYRDLRSAAASGWDFSSRWMDNPQQLNTLRTTSIVPVDLNSLMFKMEKILARASKAIGDNAMANQYETLANARQKGIEKYLWNDQQGWYADYDLKSHKVRNQLTAAALFPLYVNAAAKDRASKMATATKTHLLQPGGLNTTSVKSGQQWDAPNGWAPLQWVATEGLQNYGQKEVAMDISWHFLTNVQHTYDREKKLVEKYDVSTTGTGGGGGEYPLQDGFGWTNGVTLKMLDLICPKEQPCDNVPATRPLSESTTQPLKQKEAEPTP.

The signal sequence occupies residues 1–30; sequence MKSPAPSRPQKMALIPACIFLCFAALSVQA. Substrate is bound by residues arginine 152, 159–160, asparagine 196, 205–207, 277–279, and glycine 310; these read WD, RSQ, and RPE. Residues aspartate 312 and glutamate 496 each act as proton donor/acceptor in the active site. Glutamate 511 is a binding site for substrate. The disordered stretch occupies residues 539 to 565; the sequence is CDNVPATRPLSESTTQPLKQKEAEPTP.

The protein belongs to the glycosyl hydrolase 37 family. Monomer.

It is found in the periplasm. It carries out the reaction alpha,alpha-trehalose + H2O = alpha-D-glucose + beta-D-glucose. Functionally, provides the cells with the ability to utilize trehalose at high osmolarity by splitting it into glucose molecules that can subsequently be taken up by the phosphotransferase-mediated uptake system. This Escherichia coli O45:K1 (strain S88 / ExPEC) protein is Periplasmic trehalase.